Consider the following 131-residue polypeptide: Small ribosomal subunit protein bS6 (131 aa).

Residues 96–131 (ITEASPMAKAKDERDSRRGPAGDRSYDEANAEEIAE) are disordered. Positions 104 to 122 (KAKDERDSRRGPAGDRSYD) are enriched in basic and acidic residues.

This sequence belongs to the bacterial ribosomal protein bS6 family.

In terms of biological role, binds together with bS18 to 16S ribosomal RNA. In Shewanella oneidensis (strain ATCC 700550 / JCM 31522 / CIP 106686 / LMG 19005 / NCIMB 14063 / MR-1), this protein is Small ribosomal subunit protein bS6.